We begin with the raw amino-acid sequence, 239 residues long: Fatty acid metabolism regulator protein (239 aa).

One can recognise an HTH gntR-type domain in the interval Gln-6 to Phe-74. The H-T-H motif DNA-binding region spans Glu-34 to Gln-53.

As to quaternary structure, homodimer.

The protein resides in the cytoplasm. Functionally, multifunctional regulator of fatty acid metabolism. The sequence is that of Fatty acid metabolism regulator protein from Cronobacter sakazakii (strain ATCC BAA-894) (Enterobacter sakazakii).